We begin with the raw amino-acid sequence, 506 residues long: RNA-splicing ligase RtcB homolog (506 aa).

Mn(2+)-binding residues include Asp120, Cys123, His228, His260, and His354. 227 to 231 contacts GMP; it reads NHYAE. GMP contacts are provided by residues 354–355, 403–406, Ser410, 429–432, and Lys505; these read HN, GGSM, and HGAG. Residue His429 is the GMP-histidine intermediate of the active site.

Belongs to the RtcB family. In terms of assembly, catalytic component of the tRNA-splicing ligase complex. Mn(2+) serves as cofactor.

The catalysed reaction is a 3'-end 3'-phospho-ribonucleotide-RNA + a 5'-end dephospho-ribonucleoside-RNA + GTP = a ribonucleotidyl-ribonucleotide-RNA + GMP + diphosphate. It catalyses the reaction a 3'-end 2',3'-cyclophospho-ribonucleotide-RNA + a 5'-end dephospho-ribonucleoside-RNA + GTP + H2O = a ribonucleotidyl-ribonucleotide-RNA + GMP + diphosphate + H(+). Functionally, catalytic subunit of the tRNA-splicing ligase complex that acts by directly joining spliced tRNA halves to mature-sized tRNAs by incorporating the precursor-derived splice junction phosphate into the mature tRNA as a canonical 3',5'-phosphodiester. May act as an RNA ligase with broad substrate specificity, and may function toward other RNAs. The polypeptide is RNA-splicing ligase RtcB homolog (Anopheles gambiae (African malaria mosquito)).